Here is a 312-residue protein sequence, read N- to C-terminus: Aquaporin-6 (312 aa).

The Cytoplasmic portion of the chain corresponds to 1–50 (MDDKFDDDALPNSKTTAKDYEDKLPEYDYTTTFPNTWMRLREPFREYFAE). Residues 51–71 (FVGVAVLIIFGVGADCQVVLS) traverse the membrane as a helical segment. The Extracellular segment spans residues 72 to 89 (ANTGVASSPKGSYLSLNC). The helical transmembrane segment at 90–110 (GWAIGTAMGVWISGGISGGHI) threads the bilayer. Residues 111–113 (NPA) carry the NPA 1 motif. At 111–128 (NPAVTLAMATWRGFPWWK) the chain is on the cytoplasmic side. Residues 129–149 (VPGFIFAQLLGGIVGAGLVYV) form a helical membrane-spanning segment. The Extracellular segment spans residues 150–183 (NYIHAIDIVEGGRHIRTLDTAGLFATYAADYMTN). Asparagine 183 carries N-linked (GlcNAc...) asparagine glycosylation. Residues 184–204 (LSCFFSEFLATAVLIIVIHAM) traverse the membrane as a helical segment. The Cytoplasmic portion of the chain corresponds to 205 to 213 (NDKRNTPPP). The helical transmembrane segment at 214-234 (AGIVPFVLFFLILGIGASLGM) threads the bilayer. Residues 235–267 (ETGYAINPARDLGPRMLTAMVGYGRQVFAFRNQ) are Extracellular-facing. Positions 241-243 (NPA) match the NPA 2 motif. The chain crosses the membrane as a helical span at residues 268–288 (YWIWCPVLAPFLGAQVGTIFY). The Cytoplasmic segment spans residues 289–312 (DLFFYKGQDNVFGRLGSHIHISPA).

This sequence belongs to the MIP/aquaporin (TC 1.A.8) family.

The protein localises to the membrane. It carries out the reaction H2O(in) = H2O(out). Water channel required to facilitate the transport of water across membranes. Does not mediate the transport carbon dioxide nor nitric oxide across the membrane. Plays a key role in root water transport of mycorrhizal plant such ectomycorrhizal white spruce or trembling aspen via the hydration at the hyphal-root interphase. Contributes in fungal cellular processes during the basidiocarp formation. The protein is Aquaporin-6 of Laccaria bicolor (Bicoloured deceiver).